The chain runs to 133 residues: Small ribosomal subunit protein uS11 (133 aa).

The protein belongs to the universal ribosomal protein uS11 family. Part of the 30S ribosomal subunit. Interacts with proteins S7 and S18. Binds to IF-3.

In terms of biological role, located on the platform of the 30S subunit, it bridges several disparate RNA helices of the 16S rRNA. Forms part of the Shine-Dalgarno cleft in the 70S ribosome. The chain is Small ribosomal subunit protein uS11 from Burkholderia pseudomallei (strain 1106a).